Consider the following 515-residue polypeptide: Maturase K (515 aa).

This sequence belongs to the intron maturase 2 family. MatK subfamily.

Its subcellular location is the plastid. It is found in the chloroplast. Its function is as follows. Usually encoded in the trnK tRNA gene intron. Probably assists in splicing its own and other chloroplast group II introns. This is Maturase K from Pinus banksiana (Jack pine).